We begin with the raw amino-acid sequence, 406 residues long: Prisilkin-39 (406 aa).

The first 19 residues, 1 to 19 (MKGFLTLLLVCAILSTGYC), serve as a signal peptide directing secretion. A run of 2 helical transmembrane segments spans residues 26-48 (ALTG…GAGA) and 58-80 (VGVG…YGGY). A 10 X 12 AA tandem repeat of G-G-Y-[SG]-G-Y-[GS]-Y-G-Y-P-[AT] region spans residues 78-197 (GGYSGYGYGY…YSGYSYGYPT (120 aa)).

Expression is confined to the prism and organic layers of the shell with no expression detected in the nacreous shell layer. Also expressed in the mantle edge, extrapallial fluid, hemolymph and, to a lesser extent, in the viscus (at protein level). In the mantle, localizes to inner epithelial cells of the outer fold and the outer epithelial cells of the middle fold at the bottom of the periostracal groove.

It localises to the membrane. Its function is as follows. Binds chitin and may serve as a framework constituent participating in shell formation. Inhibits aragonite precipitation and may regulate aragonite growth during shell layer formation. Does not affect calcite crystallization. In Pinctada fucata (Akoya pearl oyster), this protein is Prisilkin-39.